The following is a 159-amino-acid chain: Keratin-associated protein 11-1 (159 aa).

A run of 4 repeats spans residues 107–116, 117–126, 127–136, and 137–146. The tract at residues 107-146 is 4 X 10 AA approximate repeats; it reads CQPLSGVSTVCKPVRSISTVCQPVGGVSTICQPTCGVSRT.

Belongs to the PMG family. As to expression, wool.

Its function is as follows. In the wool cortex, wool keratin intermediate filaments are embedded in an interfilamentous matrix, consisting of wool keratin-associated proteins (KRTAP), which are essential for the formation of a rigid and resistant wool shaft through their extensive disulfide bond cross-linking with abundant cysteine residues of wool keratins. The matrix proteins include the high-sulfur and high-glycine-tyrosine keratins. The chain is Keratin-associated protein 11-1 (KRTAP11-1) from Capra hircus (Goat).